We begin with the raw amino-acid sequence, 237 residues long: E3 ubiquitin-protein ligase RNF166 (237 aa).

The RING-type zinc-finger motif lies at 33 to 73 (CPICLEVYHRPVAIGSCGHTFCGECLQPCLQVPSPLCPLCR). Positions 98, 101, 113, and 117 each coordinate Zn(2+). The C2HC RNF-type zinc finger occupies 98-117 (CRGCNKKVTLAKMRAHISSC). Residues 221–237 (DEEAAFQAALALSLSEN) enclose the UIM domain.

It localises to the cytoplasm. It catalyses the reaction S-ubiquitinyl-[E2 ubiquitin-conjugating enzyme]-L-cysteine + [acceptor protein]-L-lysine = [E2 ubiquitin-conjugating enzyme]-L-cysteine + N(6)-ubiquitinyl-[acceptor protein]-L-lysine.. The protein operates within protein modification; protein ubiquitination. In terms of biological role, E3 ubiquitin-protein ligase that promotes the ubiquitination of different substrates. In turn, participates in different biological processes including interferon production or autophagy. Plays a role in the activation of RNA virus-induced interferon-beta production by promoting the ubiquitination of TRAF3 and TRAF6. Also plays a role in the early recruitment of autophagy adapters to bacteria. Mediates 'Lys-29' and 'Lys-33'-linked ubiquitination of SQSTM1 leading to xenophagic targeting of bacteria and inhibition of their replication. This is E3 ubiquitin-protein ligase RNF166 (Rnf166) from Mus musculus (Mouse).